Consider the following 128-residue polypeptide: Fluoride-specific ion channel FluC (128 aa).

4 helical membrane-spanning segments follow: residues 4–24, 37–57, 72–92, and 101–121; these read LLLV…VGVQ, TFIV…WLAL, VGVM…ALMI, and FTYT…GLLI. 2 residues coordinate Na(+): glycine 76 and threonine 79.

The protein belongs to the fluoride channel Fluc/FEX (TC 1.A.43) family.

The protein resides in the cell inner membrane. It carries out the reaction fluoride(in) = fluoride(out). Na(+) is not transported, but it plays an essential structural role and its presence is essential for fluoride channel function. Functionally, fluoride-specific ion channel. Important for reducing fluoride concentration in the cell, thus reducing its toxicity. The protein is Fluoride-specific ion channel FluC of Caulobacter sp. (strain K31).